The chain runs to 213 residues: Kynurenine formamidase (213 aa).

W18 serves as a coordination point for substrate. H48, H52, and D54 together coordinate Zn(2+). Catalysis depends on H58, which acts as the Proton donor/acceptor. 2 residues coordinate Zn(2+): H160 and E172.

The protein belongs to the Cyclase 1 superfamily. KynB family. Homodimer. It depends on Zn(2+) as a cofactor.

The catalysed reaction is N-formyl-L-kynurenine + H2O = L-kynurenine + formate + H(+). It participates in amino-acid degradation; L-tryptophan degradation via kynurenine pathway; L-kynurenine from L-tryptophan: step 2/2. Its function is as follows. Catalyzes the hydrolysis of N-formyl-L-kynurenine to L-kynurenine, the second step in the kynurenine pathway of tryptophan degradation. In Burkholderia pseudomallei (strain 1106a), this protein is Kynurenine formamidase.